A 249-amino-acid polypeptide reads, in one-letter code: Triosephosphate isomerase (249 aa).

Position 9 to 11 (9 to 11) interacts with substrate; it reads NWK. His94 acts as the Electrophile in catalysis. Residue Glu166 is the Proton acceptor of the active site. Substrate-binding positions include Gly172, Ser211, and 232 to 233; that span reads GG.

Belongs to the triosephosphate isomerase family. Homodimer.

It localises to the cytoplasm. The catalysed reaction is D-glyceraldehyde 3-phosphate = dihydroxyacetone phosphate. Its pathway is carbohydrate biosynthesis; gluconeogenesis. It participates in carbohydrate degradation; glycolysis; D-glyceraldehyde 3-phosphate from glycerone phosphate: step 1/1. Its function is as follows. Involved in the gluconeogenesis. Catalyzes stereospecifically the conversion of dihydroxyacetone phosphate (DHAP) to D-glyceraldehyde-3-phosphate (G3P). The protein is Triosephosphate isomerase of Chromohalobacter salexigens (strain ATCC BAA-138 / DSM 3043 / CIP 106854 / NCIMB 13768 / 1H11).